The sequence spans 334 residues: Holliday junction branch migration complex subunit RuvB (334 aa).

The segment at 1–181 is large ATPase domain (RuvB-L); it reads MTRILDNDLM…FGITGHMEYY (181 aa). Residues Leu-20, Arg-21, Gly-62, Lys-65, Thr-66, Thr-67, 128-130, Arg-171, Tyr-181, and Arg-218 each bind ATP; that span reads EDF. A Mg(2+)-binding site is contributed by Thr-66. The tract at residues 182 to 252 is small ATPAse domain (RuvB-S); sequence QVDDLTEIVE…MTDKALEMLD (71 aa). Residues 255–334 are head domain (RuvB-H); sequence HEGLDYVDQK…LKYPLDTKTE (80 aa). DNA contacts are provided by Arg-291, Arg-310, Arg-312, and Arg-315.

Belongs to the RuvB family. In terms of assembly, homohexamer. Forms an RuvA(8)-RuvB(12)-Holliday junction (HJ) complex. HJ DNA is sandwiched between 2 RuvA tetramers; dsDNA enters through RuvA and exits via RuvB. An RuvB hexamer assembles on each DNA strand where it exits the tetramer. Each RuvB hexamer is contacted by two RuvA subunits (via domain III) on 2 adjacent RuvB subunits; this complex drives branch migration. In the full resolvosome a probable DNA-RuvA(4)-RuvB(12)-RuvC(2) complex forms which resolves the HJ.

It is found in the cytoplasm. The catalysed reaction is ATP + H2O = ADP + phosphate + H(+). In terms of biological role, the RuvA-RuvB-RuvC complex processes Holliday junction (HJ) DNA during genetic recombination and DNA repair, while the RuvA-RuvB complex plays an important role in the rescue of blocked DNA replication forks via replication fork reversal (RFR). RuvA specifically binds to HJ cruciform DNA, conferring on it an open structure. The RuvB hexamer acts as an ATP-dependent pump, pulling dsDNA into and through the RuvAB complex. RuvB forms 2 homohexamers on either side of HJ DNA bound by 1 or 2 RuvA tetramers; 4 subunits per hexamer contact DNA at a time. Coordinated motions by a converter formed by DNA-disengaged RuvB subunits stimulates ATP hydrolysis and nucleotide exchange. Immobilization of the converter enables RuvB to convert the ATP-contained energy into a lever motion, pulling 2 nucleotides of DNA out of the RuvA tetramer per ATP hydrolyzed, thus driving DNA branch migration. The RuvB motors rotate together with the DNA substrate, which together with the progressing nucleotide cycle form the mechanistic basis for DNA recombination by continuous HJ branch migration. Branch migration allows RuvC to scan DNA until it finds its consensus sequence, where it cleaves and resolves cruciform DNA. This is Holliday junction branch migration complex subunit RuvB from Streptococcus uberis (strain ATCC BAA-854 / 0140J).